A 517-amino-acid chain; its full sequence is Membrane-bound lytic murein transglycosylase F (517 aa).

The N-terminal stretch at 1 to 32 (MKKFKINYLLIGIVTLLLAAALWPSIPWFGKA) is a signal peptide. The tract at residues 33-269 (ENRIAAIQSR…RLEEKYLGHG (237 aa)) is non-LT domain. The segment at 270–517 (GDFDYVDTRS…PNTLVQAPRR (248 aa)) is LT domain. E314 is a catalytic residue.

It in the N-terminal section; belongs to the bacterial solute-binding protein 3 family. This sequence in the C-terminal section; belongs to the transglycosylase Slt family.

The protein resides in the cell outer membrane. It carries out the reaction Exolytic cleavage of the (1-&gt;4)-beta-glycosidic linkage between N-acetylmuramic acid (MurNAc) and N-acetylglucosamine (GlcNAc) residues in peptidoglycan, from either the reducing or the non-reducing ends of the peptidoglycan chains, with concomitant formation of a 1,6-anhydrobond in the MurNAc residue.. Functionally, murein-degrading enzyme that degrades murein glycan strands and insoluble, high-molecular weight murein sacculi, with the concomitant formation of a 1,6-anhydromuramoyl product. Lytic transglycosylases (LTs) play an integral role in the metabolism of the peptidoglycan (PG) sacculus. Their lytic action creates space within the PG sacculus to allow for its expansion as well as for the insertion of various structures such as secretion systems and flagella. The sequence is that of Membrane-bound lytic murein transglycosylase F from Enterobacter sp. (strain 638).